A 338-amino-acid polypeptide reads, in one-letter code: Ketol-acid reductoisomerase (NADP(+)) (338 aa).

The KARI N-terminal Rossmann domain maps to 1 to 181; it reads MKVFYDKDCD…GGGKGGIIET (181 aa). Residues 24-27, Arg47, and Ser52 contribute to the NADP(+) site; that span reads YGSQ. His107 is a catalytic residue. Gly133 serves as a coordination point for NADP(+). In terms of domain architecture, KARI C-terminal knotted spans 182-327; the sequence is NFKEETETDL…GQLRAMMPWI (146 aa). Asp190, Glu194, Glu226, and Glu230 together coordinate Mg(2+). Ser251 is a substrate binding site.

Belongs to the ketol-acid reductoisomerase family. The cofactor is Mg(2+).

The catalysed reaction is (2R)-2,3-dihydroxy-3-methylbutanoate + NADP(+) = (2S)-2-acetolactate + NADPH + H(+). It catalyses the reaction (2R,3R)-2,3-dihydroxy-3-methylpentanoate + NADP(+) = (S)-2-ethyl-2-hydroxy-3-oxobutanoate + NADPH + H(+). It functions in the pathway amino-acid biosynthesis; L-isoleucine biosynthesis; L-isoleucine from 2-oxobutanoate: step 2/4. Its pathway is amino-acid biosynthesis; L-valine biosynthesis; L-valine from pyruvate: step 2/4. Its function is as follows. Involved in the biosynthesis of branched-chain amino acids (BCAA). Catalyzes an alkyl-migration followed by a ketol-acid reduction of (S)-2-acetolactate (S2AL) to yield (R)-2,3-dihydroxy-isovalerate. In the isomerase reaction, S2AL is rearranged via a Mg-dependent methyl migration to produce 3-hydroxy-3-methyl-2-ketobutyrate (HMKB). In the reductase reaction, this 2-ketoacid undergoes a metal-dependent reduction by NADPH to yield (R)-2,3-dihydroxy-isovalerate. The sequence is that of Ketol-acid reductoisomerase (NADP(+)) from Delftia acidovorans (strain DSM 14801 / SPH-1).